A 152-amino-acid polypeptide reads, in one-letter code: MTSTLNTLKSNTGSRKKKLRKGRGIAAGQGASCGFGMRGQKSRSGRPTRPGFEGGQMPLYRRVPKLKHFEIINQKNFSIVNLSKLSEFKESEVVNIDSLVKKKLLFKPKFPLKILGNGEVKVKLKVQAHAFTKVAKEKIEAAGGSCEIINNK.

The span at 1–12 (MTSTLNTLKSNT) shows a compositional bias: polar residues. A disordered region spans residues 1–57 (MTSTLNTLKSNTGSRKKKLRKGRGIAAGQGASCGFGMRGQKSRSGRPTRPGFEGGQM). Basic residues predominate over residues 14 to 23 (SRKKKLRKGR). Gly residues predominate over residues 25–37 (IAAGQGASCGFGM).

Belongs to the universal ribosomal protein uL15 family. In terms of assembly, part of the 50S ribosomal subunit.

Its function is as follows. Binds to the 23S rRNA. This Prochlorococcus marinus subsp. pastoris (strain CCMP1986 / NIES-2087 / MED4) protein is Large ribosomal subunit protein uL15.